A 336-amino-acid polypeptide reads, in one-letter code: Probable magnesium transporter NIPA2 (336 aa).

Over 1-7 (MEEMSPD) the chain is Extracellular. Residues 8–28 (NIHGVILAVSSSIFIGSSFII) traverse the membrane as a helical segment. Residues 29 to 55 (KKKGLKKAGVSGARAGEGGYGYLYEPW) are Cytoplasmic-facing. The helical transmembrane segment at 56–76 (WWAGMITMIVGEIANFAAYAF) threads the bilayer. Residues 77-79 (APA) are Extracellular-facing. Residues 80–100 (ILVTPLGALSIIFSAVLAHFI) traverse the membrane as a helical segment. Residues 101–104 (LEEK) are Cytoplasmic-facing. Residues 105-125 (LHMFGILGCVLCVVGSTTIVL) traverse the membrane as a helical segment. Over 126–145 (HAPHEQGIESVKQVWHLATE) the chain is Extracellular. The chain crosses the membrane as a helical span at residues 146-166 (PGFLAYSAVVLVVVLALIFYY). The Cytoplasmic portion of the chain corresponds to 167-179 (EPRYGKTHMIVYV). A helical membrane pass occupies residues 180 to 200 (GICSLMGSLTVMSVKAVAIAI). The Extracellular portion of the chain corresponds to 201–212 (KLTFSGMNQFKY). A helical membrane pass occupies residues 213–233 (FHAWIFIIVVTICCILQINYL). Residues 234 to 244 (NKALDNFNTAV) are Cytoplasmic-facing. The chain crosses the membrane as a helical span at residues 245 to 265 (ISPVYYVMFTTFTILASMIMF). Residues 266-272 (KDWASQS) are Extracellular-facing. The chain crosses the membrane as a helical span at residues 273–293 (GLQIATELCGFVTILSGTFLL). Residues 294–336 (HKTKDMGNSTSLRGSTSHSPRDTPVFINSGSSRSSNSTRPAIL) lie on the Cytoplasmic side of the membrane. The interval 303–336 (TSLRGSTSHSPRDTPVFINSGSSRSSNSTRPAIL) is disordered. Positions 321–330 (NSGSSRSSNS) are enriched in low complexity.

The protein belongs to the NIPA (TC 2.A.7) family. As to quaternary structure, homodimer.

It is found in the cell membrane. The protein localises to the early endosome. Functionally, acts as a Mg(2+) transporter. Can also transport other divalent cations such as Fe(2+), Sr(2+), Ba(2+), Mn(2+) and Co(2+) but to a much less extent than Mg(2+). The polypeptide is Probable magnesium transporter NIPA2 (Arabidopsis thaliana (Mouse-ear cress)).